We begin with the raw amino-acid sequence, 51 residues long: Suberization-associated anionic peroxidase 1 (51 aa).

Residue His-30 participates in heme binding. Residue Thr-31 participates in Ca(2+) binding.

Belongs to the peroxidase family. Classical plant (class III) peroxidase subfamily. The cofactor is heme b. Ca(2+) serves as cofactor.

It localises to the secreted. The catalysed reaction is 2 a phenolic donor + H2O2 = 2 a phenolic radical donor + 2 H2O. Its function is as follows. Removal of H(2)O(2), oxidation of toxic reductants, biosynthesis and degradation of lignin, suberization, auxin catabolism, response to environmental stresses such as wounding, pathogen attack and oxidative stress. These functions might be dependent on each isozyme/isoform in each plant tissue. Functionally, suggested to catalyze the deposition of the aromatic residues of suberin on the cell wall and thus play a role in cell-suberization. This Capsicum annuum (Capsicum pepper) protein is Suberization-associated anionic peroxidase 1.